Reading from the N-terminus, the 285-residue chain is Acetyl-coenzyme A carboxylase carboxyl transferase subunit beta (285 aa).

The region spanning 22 to 285 (LWTKCEACGA…HPGVAYAPGV (264 aa)) is the CoA carboxyltransferase N-terminal domain. Zn(2+) contacts are provided by Cys-26, Cys-29, Cys-45, and Cys-48. The segment at 26–48 (CEACGAQIYKKEFQENLHVCPKC) adopts a C4-type zinc-finger fold.

The protein belongs to the AccD/PCCB family. As to quaternary structure, acetyl-CoA carboxylase is a heterohexamer composed of biotin carboxyl carrier protein (AccB), biotin carboxylase (AccC) and two subunits each of ACCase subunit alpha (AccA) and ACCase subunit beta (AccD). Zn(2+) is required as a cofactor.

It localises to the cytoplasm. The catalysed reaction is N(6)-carboxybiotinyl-L-lysyl-[protein] + acetyl-CoA = N(6)-biotinyl-L-lysyl-[protein] + malonyl-CoA. It functions in the pathway lipid metabolism; malonyl-CoA biosynthesis; malonyl-CoA from acetyl-CoA: step 1/1. Functionally, component of the acetyl coenzyme A carboxylase (ACC) complex. Biotin carboxylase (BC) catalyzes the carboxylation of biotin on its carrier protein (BCCP) and then the CO(2) group is transferred by the transcarboxylase to acetyl-CoA to form malonyl-CoA. The sequence is that of Acetyl-coenzyme A carboxylase carboxyl transferase subunit beta from Thermus thermophilus (strain ATCC BAA-163 / DSM 7039 / HB27).